The primary structure comprises 479 residues: Sodium-coupled neutral amino acid transporter 5 (479 aa).

Residues 1 to 61 (MAISCAVGME…LDFEGKTSFG (61 aa)) are Cytoplasmic-facing. The helical transmembrane segment at 62–84 (MSVFNLSNAIMGSGILGLAYAMA) threads the bilayer. The Extracellular segment spans residues 85 to 97 (HTGVIFFLALLLC). The helical transmembrane segment at 98–118 (IALLSSYSIHLLLTCASVVGI) threads the bilayer. Topologically, residues 119–135 (RAYEQLGQRAFGPAGKV) are cytoplasmic. The chain crosses the membrane as a helical span at residues 136–156 (VVAIIICLHNVGAMSSYLFII). At 157–176 (KSELPLVIGTFLHMDPEGDW) the chain is on the extracellular side. A helical transmembrane segment spans residues 177–197 (FLKGNLLIILVSLLIILPLAL). Over 198-202 (MKHLG) the chain is Cytoplasmic. Residues 203–223 (YLGYTSSLSLTCMLFFLISVI) traverse the membrane as a helical segment. Residues 224–264 (YKKFQIGCDVSHNDTVVEAEQAPLQAFNSSCEAELFTVDSQ) lie on the Extracellular side of the membrane. Residues C231 and C254 are joined by a disulfide bond. N-linked (GlcNAc...) asparagine glycosylation is present at N236. The chain crosses the membrane as a helical span at residues 265 to 285 (MSYTVPIMAFAFVCHPEVLPI). The Cytoplasmic portion of the chain corresponds to 286-302 (YTELCRPTQRRMQAVAN). The helical transmembrane segment at 303-323 (MSIGAMFIMYGLTATFGYLTF) threads the bilayer. Over 324 to 341 (YSTVKAEMLEMYTQEDML) the chain is Extracellular. A helical transmembrane segment spans residues 342-362 (ILCVRLAVLLAVTLTVPVVLF). The Cytoplasmic portion of the chain corresponds to 363–383 (PIRRALQQLLFPSKAFSWLRH). A helical transmembrane segment spans residues 384 to 404 (VAIALILLILVNILVICVPTI). The Extracellular portion of the chain corresponds to 405 to 406 (RD). The helical transmembrane segment at 407 to 427 (IFGFIGSTSAPSLIFILPSVF) threads the bilayer. At 428 to 446 (YLRIVPTEVEPLFSWPKIQ) the chain is on the cytoplasmic side. The helical transmembrane segment at 447-467 (ALCFGVLGVLFMAISLGFMFA) threads the bilayer. The Extracellular segment spans residues 468–479 (NWATGQSRMSGH).

This sequence belongs to the amino acid/polyamine transporter 2 family. As to expression, expressed in the ganglion cell layer and the nerve fiber layer (at protein level). Also expreseed in the cells of the inner nuclear layer and in the inner plexiform layer (at protein level). Expressed in Mueller and ganglion retinal cell.

It is found in the cell membrane. The catalysed reaction is L-glutamine(out) + Na(+)(out) + H(+)(in) = L-glutamine(in) + Na(+)(in) + H(+)(out). It catalyses the reaction L-serine(out) + Na(+)(out) + H(+)(in) = L-serine(in) + Na(+)(in) + H(+)(out). It carries out the reaction L-alanine(out) + Na(+)(out) + H(+)(in) = L-alanine(in) + Na(+)(in) + H(+)(out). The enzyme catalyses glycine(out) + Na(+)(out) + H(+)(in) = glycine(in) + Na(+)(in) + H(+)(out). The catalysed reaction is L-asparagine(out) + Na(+)(out) + H(+)(in) = L-asparagine(in) + Na(+)(in) + H(+)(out). It catalyses the reaction L-histidine(out) + Na(+)(out) + H(+)(in) = L-histidine(in) + Na(+)(in) + H(+)(out). It carries out the reaction L-cysteine(out) + Na(+)(out) + H(+)(in) = L-cysteine(in) + Na(+)(in) + H(+)(out). With respect to regulation, not inhibited by lithium. Partial allosteric regulation on ions sodium binding. In terms of biological role, symporter that cotransports neutral amino acids and sodium ions, coupled to an H(+) antiporter activity. Releases L-glutamine and glycine from astroglial cells and may participate in the glutamate/GABA-L-glutamine cycle and the NMDA receptors activation. In addition, contributes significantly to L-glutamine uptake in retina, namely in ganglion and Mueller cells therefore, participates in the retinal glutamate-glutamine cycle. The transport activity is pH sensitive, Li(+) tolerant, bidirectional and associated with large uncoupled fluxes of protons. Moreover functions in both direction and is associated with large uncoupled fluxes of protons. The transport is electroneutral coupled to the cotransport of 1 Na(+) and the antiport of 1 H(+). May have a particular importance for modulation of net hepatic glutamine flux. The polypeptide is Sodium-coupled neutral amino acid transporter 5 (Mus musculus (Mouse)).